A 551-amino-acid chain; its full sequence is MTITYTNKVANARLGSFSSLLLCWRGSIYKLLYGEFLVFIFLYYSIRGLYRMVLSSDQQLLFEKLALYCDSYIQLIPISFVLGFYVTLVVSRWWSQYENLPWPDRLMIQVSSFVEGKDEEGRLLRRTLIRYAILGQVLILRSISTSVYKRFPTLHHLVLAGFMTHGEHKQLQKLGLPHNTFWVPWVWFANLSMKAYLGGRIRDTVLLQSLMNEVCTLRTQCGQLYAYDWISIPLVYTQVVTVAVYSFFLACLIGRQFLNPNKDYPGHEMDLVVPVFTILQFLFYMGWLKVAEQLINPFGEDDDDFETNWIIDRNLQVSLLSVDGMHQNLPPMERDMYWNEAAPQPPYTAASARSRRHSFMGSTFNISLKKEDLELWSKEEADTDKKESGYSSTIGCFLGLQPKNYHLPLKDLKTKLLCSKNPLLEGQCKDANQKNQKDVWKFKGLDFLKCVPRFKRRGSHCGPQAPSSHPTEQSAPSSSDTGDGPSTDYQEICHMKKKTVEFNLNIPESPTEHLQQRRLDQMSTNIQALMKEHAESYPYRDEAGTKPVLYE.

Residues 1–31 (MTITYTNKVANARLGSFSSLLLCWRGSIYKL) lie on the Cytoplasmic side of the membrane. Ala10 is a binding site for Ca(2+). The helical transmembrane segment at 32-51 (LYGEFLVFIFLYYSIRGLYR) threads the bilayer. The Extracellular portion of the chain corresponds to 52 to 60 (MVLSSDQQL). The chain crosses the membrane as a helical span at residues 61–82 (LFEKLALYCDSYIQLIPISFVL). Residues 83 to 237 (GFYVTLVVSR…DWISIPLVYT (155 aa)) lie on the Cytoplasmic side of the membrane. Residues 238-255 (QVVTVAVYSFFLACLIGR) form a helical membrane-spanning segment. Over 256–274 (QFLNPNKDYPGHEMDLVVP) the chain is Extracellular. The chain crosses the membrane as a helical span at residues 275–288 (VFTILQFLFYMGWL). At 289-551 (KVAEQLINPF…EAGTKPVLYE (263 aa)) the chain is on the cytoplasmic side. Positions 293, 296, 301, and 304 each coordinate Ca(2+). Residues 346 to 379 (PYTAASARSRRHSFMGSTFNISLKKEDLELWSKE) are auto-inhibitory segment. The interval 459 to 489 (SHCGPQAPSSHPTEQSAPSSSDTGDGPSTDY) is disordered. The segment covering 465–475 (APSSHPTEQSA) has biased composition (polar residues). Over residues 476–488 (PSSSDTGDGPSTD) the composition is skewed to low complexity.

Belongs to the anion channel-forming bestrophin (TC 1.A.46) family. Calcium-sensitive chloride channel subfamily. As to quaternary structure, interacts with YWHAG; this interaction promotes the ligand-gated L-glutamate channel activity leading to the positive regulation of NMDA glutamate receptor activity through the L-glutamate secretion.

It is found in the cell membrane. Its subcellular location is the basolateral cell membrane. The enzyme catalyses 4-aminobutanoate(in) = 4-aminobutanoate(out). It carries out the reaction L-glutamate(out) = L-glutamate(in). It catalyses the reaction chloride(in) = chloride(out). The catalysed reaction is hydrogencarbonate(in) = hydrogencarbonate(out). The enzyme catalyses D-serine(in) = D-serine(out). With respect to regulation, inactivated by sulfhydryl-reactive agents. Its function is as follows. Ligand-gated anion channel that allows the movement of anions across cell membranes when activated by calcium (Ca2+). Allows the movement of chloride and hydrogencarbonate. Found in a partially open conformation leading to significantly smaller chloride movement. Upon F2R/PAR-1 activation, the sequestered calcium is released into the cytosol of astrocytes, leading to the (Ca2+)-dependent release of L-glutamate into the synaptic cleft that targets the neuronal postsynaptic GRIN2A/NMDAR receptor resulting in the synaptic plasticity regulation. Upon activation of the norepinephrine-alpha-1 adrenergic receptor signaling pathway, transports as well D-serine than L-glutamate in a (Ca2+)-dependent manner, leading to activation of adjacent NMDAR receptors and therefore regulates the heterosynaptic long-term depression and metaplasticity during initial memory acquisition. Releases the 4-aminobutanoate neurotransmitter in a (Ca2+)-dependent manner, and participates in its tonic release from cerebellar glial cells. The chain is Bestrophin-1 from Mus musculus (Mouse).